The following is a 226-amino-acid chain: Orotate phosphoribosyltransferase (226 aa).

5-phospho-alpha-D-ribose 1-diphosphate contacts are provided by residues R107, K108, K111, and 133-141 (EDLTTDGGS). T137 contributes to the orotate binding site.

It belongs to the purine/pyrimidine phosphoribosyltransferase family. PyrE subfamily. In terms of assembly, homodimer. Mg(2+) serves as cofactor.

It catalyses the reaction orotidine 5'-phosphate + diphosphate = orotate + 5-phospho-alpha-D-ribose 1-diphosphate. Its pathway is pyrimidine metabolism; UMP biosynthesis via de novo pathway; UMP from orotate: step 1/2. Catalyzes the transfer of a ribosyl phosphate group from 5-phosphoribose 1-diphosphate to orotate, leading to the formation of orotidine monophosphate (OMP). This chain is Orotate phosphoribosyltransferase, found in Ruegeria sp. (strain TM1040) (Silicibacter sp.).